The primary structure comprises 165 residues: Large ribosomal subunit protein uL10 (165 aa).

This sequence belongs to the universal ribosomal protein uL10 family. Part of the ribosomal stalk of the 50S ribosomal subunit. The N-terminus interacts with L11 and the large rRNA to form the base of the stalk. The C-terminus forms an elongated spine to which L12 dimers bind in a sequential fashion forming a multimeric L10(L12)X complex.

In terms of biological role, forms part of the ribosomal stalk, playing a central role in the interaction of the ribosome with GTP-bound translation factors. The sequence is that of Large ribosomal subunit protein uL10 from Citrobacter koseri (strain ATCC BAA-895 / CDC 4225-83 / SGSC4696).